Reading from the N-terminus, the 293-residue chain is Acetyl-coenzyme A carboxylase carboxyl transferase subunit beta (293 aa).

The region spanning 29–293 (LWVKCSECSQ…GVKELAEANT (265 aa)) is the CoA carboxyltransferase N-terminal domain. Zn(2+)-binding residues include Cys33, Cys36, Cys52, and Cys55. The C4-type zinc-finger motif lies at 33 to 55 (CSECSQVAYRKDLISNFNVCSNC).

This sequence belongs to the AccD/PCCB family. As to quaternary structure, acetyl-CoA carboxylase is a heterohexamer composed of biotin carboxyl carrier protein (AccB), biotin carboxylase (AccC) and two subunits each of ACCase subunit alpha (AccA) and ACCase subunit beta (AccD). It depends on Zn(2+) as a cofactor.

Its subcellular location is the cytoplasm. The enzyme catalyses N(6)-carboxybiotinyl-L-lysyl-[protein] + acetyl-CoA = N(6)-biotinyl-L-lysyl-[protein] + malonyl-CoA. The protein operates within lipid metabolism; malonyl-CoA biosynthesis; malonyl-CoA from acetyl-CoA: step 1/1. Its function is as follows. Component of the acetyl coenzyme A carboxylase (ACC) complex. Biotin carboxylase (BC) catalyzes the carboxylation of biotin on its carrier protein (BCCP) and then the CO(2) group is transferred by the transcarboxylase to acetyl-CoA to form malonyl-CoA. This Prochlorococcus marinus (strain MIT 9301) protein is Acetyl-coenzyme A carboxylase carboxyl transferase subunit beta.